The chain runs to 390 residues: Magnesium-protoporphyrin IX monomethyl ester [oxidative] cyclase (390 aa).

Belongs to the AcsF family. Fe cation serves as cofactor.

It catalyses the reaction Mg-protoporphyrin IX 13-monomethyl ester + 3 NADPH + 3 O2 + 2 H(+) = 3,8-divinyl protochlorophyllide a + 3 NADP(+) + 5 H2O. It participates in porphyrin-containing compound metabolism; chlorophyll biosynthesis (light-independent). Catalyzes the formation of the isocyclic ring in chlorophyll biosynthesis. Mediates the cyclase reaction, which results in the formation of divinylprotochlorophyllide (Pchlide) characteristic of all chlorophylls from magnesium-protoporphyrin IX 13-monomethyl ester (MgPMME). The protein is Magnesium-protoporphyrin IX monomethyl ester [oxidative] cyclase of Prochlorococcus marinus (strain AS9601).